Reading from the N-terminus, the 113-residue chain is Nucleoid-associated protein PMT_0025 (113 aa).

Belongs to the YbaB/EbfC family. As to quaternary structure, homodimer.

Its subcellular location is the cytoplasm. It localises to the nucleoid. In terms of biological role, binds to DNA and alters its conformation. May be involved in regulation of gene expression, nucleoid organization and DNA protection. This is Nucleoid-associated protein PMT_0025 from Prochlorococcus marinus (strain MIT 9313).